Reading from the N-terminus, the 205-residue chain is MIKVYGVPGWGSTISELMLTLADIPYQFVDVSGFDHEGASRELLKTLNPLCQVPTLALENDEIMTETAAIALMVLDRRPDLAPPVGRAERQLFQRLLVWLVANVYPTFTFADYPERWAPDAPEQLKKNVIEYRKSLYIWLNSQLTAEPYAFGEQLTLVDCYLCTMRTWGPGHEWFQDNATNISAIADAVCQLPKLQEVLKRNEII.

The GST N-terminal domain maps to 1-82; that stretch reads MIKVYGVPGW…MVLDRRPDLA (82 aa). Glutathione-binding positions include Val-53 and 66 to 67; that span reads ET. In terms of domain architecture, GST C-terminal spans 86–205; the sequence is GRAERQLFQR…QEVLKRNEII (120 aa).

Belongs to the GST superfamily. Beta family.

This is an uncharacterized protein from Escherichia coli (strain K12).